A 155-amino-acid polypeptide reads, in one-letter code: MSESCPCCSGLQYNACCQPYLTHAATAAEPAILMRSRYTAYVKHDVDYLIATWHPDLHPEKWRESLTESCQNSQWLGLTILATSPGKIPDEGYVEFAARYISEIDSQRTEVMRERSRFLRQHNRWYYIDGVHLQTGRNEPCPCGSGKKYKKCCGQ.

The protein belongs to the UPF0225 family.

The sequence is that of UPF0225 protein ECA2332 from Pectobacterium atrosepticum (strain SCRI 1043 / ATCC BAA-672) (Erwinia carotovora subsp. atroseptica).